Consider the following 322-residue polypeptide: Transaldolase (322 aa).

Lys-136 (schiff-base intermediate with substrate) is an active-site residue.

It belongs to the transaldolase family. Type 1 subfamily. In terms of assembly, homodimer.

The protein resides in the cytoplasm. The enzyme catalyses D-sedoheptulose 7-phosphate + D-glyceraldehyde 3-phosphate = D-erythrose 4-phosphate + beta-D-fructose 6-phosphate. Its pathway is carbohydrate degradation; pentose phosphate pathway; D-glyceraldehyde 3-phosphate and beta-D-fructose 6-phosphate from D-ribose 5-phosphate and D-xylulose 5-phosphate (non-oxidative stage): step 2/3. Its function is as follows. Transaldolase is important for the balance of metabolites in the pentose-phosphate pathway. The polypeptide is Transaldolase (Xanthomonas oryzae pv. oryzae (strain MAFF 311018)).